A 267-amino-acid chain; its full sequence is Eukaryotic translation initiation factor 3 subunit J (267 aa).

Positions 1 to 70 (MSWNDDDVFA…KDKKSSTDQV (70 aa)) are disordered. Residues 24 to 38 (WDAEEPIMESWDAEE) are compositionally biased toward acidic residues. Basic and acidic residues predominate over residues 39-66 (TPAKKETSPKPDSKKNAKKDSKKDKKSS). Positions 192–220 (IESIRQSIATLNVLMKDKEREERRARLAK) form a coiled coil.

Belongs to the eIF-3 subunit J family. In terms of assembly, component of the eukaryotic translation initiation factor 3 (eIF-3) complex.

The protein resides in the cytoplasm. In terms of biological role, component of the eukaryotic translation initiation factor 3 (eIF-3) complex, which is involved in protein synthesis of a specialized repertoire of mRNAs and, together with other initiation factors, stimulates binding of mRNA and methionyl-tRNAi to the 40S ribosome. The eIF-3 complex specifically targets and initiates translation of a subset of mRNAs involved in cell proliferation. This is Eukaryotic translation initiation factor 3 subunit J from Vanderwaltozyma polyspora (strain ATCC 22028 / DSM 70294 / BCRC 21397 / CBS 2163 / NBRC 10782 / NRRL Y-8283 / UCD 57-17) (Kluyveromyces polysporus).